We begin with the raw amino-acid sequence, 241 residues long: 1-(5-phosphoribosyl)-5-[(5-phosphoribosylamino)methylideneamino] imidazole-4-carboxamide isomerase (241 aa).

The active-site Proton acceptor is aspartate 8. Catalysis depends on aspartate 129, which acts as the Proton donor.

The protein belongs to the HisA/HisF family.

It is found in the cytoplasm. The catalysed reaction is 1-(5-phospho-beta-D-ribosyl)-5-[(5-phospho-beta-D-ribosylamino)methylideneamino]imidazole-4-carboxamide = 5-[(5-phospho-1-deoxy-D-ribulos-1-ylimino)methylamino]-1-(5-phospho-beta-D-ribosyl)imidazole-4-carboxamide. It participates in amino-acid biosynthesis; L-histidine biosynthesis; L-histidine from 5-phospho-alpha-D-ribose 1-diphosphate: step 4/9. This is 1-(5-phosphoribosyl)-5-[(5-phosphoribosylamino)methylideneamino] imidazole-4-carboxamide isomerase from Rhodospirillum rubrum (strain ATCC 11170 / ATH 1.1.1 / DSM 467 / LMG 4362 / NCIMB 8255 / S1).